The sequence spans 616 residues: Dihydroxy-acid dehydratase (616 aa).

D81 contributes to the Mg(2+) binding site. [2Fe-2S] cluster is bound at residue C122. Residues D123 and K124 each contribute to the Mg(2+) site. An N6-carboxylysine modification is found at K124. Residue C195 coordinates [2Fe-2S] cluster. E491 lines the Mg(2+) pocket. The active-site Proton acceptor is S517.

Belongs to the IlvD/Edd family. In terms of assembly, homodimer. [2Fe-2S] cluster is required as a cofactor. Mg(2+) serves as cofactor.

It catalyses the reaction (2R)-2,3-dihydroxy-3-methylbutanoate = 3-methyl-2-oxobutanoate + H2O. The catalysed reaction is (2R,3R)-2,3-dihydroxy-3-methylpentanoate = (S)-3-methyl-2-oxopentanoate + H2O. It participates in amino-acid biosynthesis; L-isoleucine biosynthesis; L-isoleucine from 2-oxobutanoate: step 3/4. Its pathway is amino-acid biosynthesis; L-valine biosynthesis; L-valine from pyruvate: step 3/4. Functionally, functions in the biosynthesis of branched-chain amino acids. Catalyzes the dehydration of (2R,3R)-2,3-dihydroxy-3-methylpentanoate (2,3-dihydroxy-3-methylvalerate) into 2-oxo-3-methylpentanoate (2-oxo-3-methylvalerate) and of (2R)-2,3-dihydroxy-3-methylbutanoate (2,3-dihydroxyisovalerate) into 2-oxo-3-methylbutanoate (2-oxoisovalerate), the penultimate precursor to L-isoleucine and L-valine, respectively. This Serratia proteamaculans (strain 568) protein is Dihydroxy-acid dehydratase.